The chain runs to 273 residues: MGSFKGHALPGSFFFAMGFWWTMKNILKSVYKRQTRTCYLNSKTLLRRTEIWEGVVVLLMSLTGIAGEQFISGGPALILHKDGQWNQILGWHHTTMYLFFGLQGITQIICFTTNVLPLSSSKLMLSIAIFVETFMFYNHTHGREMIDIFVHQLLVFVGTFSGLVAFLEFLVKNNALLELLRCSLLMFQGTWFWQMAFVLYPPCGSATWNLSDIQNKMFLSMCFCWHYASILILIGVKYALANWLVKSRLRKGCTSEVGLLKHADREQESEEEV.

5 helical membrane-spanning segments follow: residues 8 to 27 (ALPGSFFFAMGFWWTMKNIL), 55 to 79 (VVVLLMSLTGIAGEQFISGGPALIL), 108 to 131 (IICFTTNVLPLSSSKLMLSIAIFV), 153 to 171 (LLVFVGTFSGLVAFLEFLV), and 217 to 236 (MFLSMCFCWHYASILILIGV).

This sequence belongs to the TMEM45 family.

It is found in the membrane. The sequence is that of Transmembrane protein 45A (Tmem45a) from Mus musculus (Mouse).